A 95-amino-acid polypeptide reads, in one-letter code: Cell division protein FtsB (95 aa).

Residues M1 to L3 are Cytoplasmic-facing. A helical transmembrane segment spans residues F4–F21. The Periplasmic portion of the chain corresponds to G22–R95. Positions D28–D62 form a coiled coil.

Belongs to the FtsB family. As to quaternary structure, part of a complex composed of FtsB, FtsL and FtsQ.

The protein localises to the cell inner membrane. Its function is as follows. Essential cell division protein. May link together the upstream cell division proteins, which are predominantly cytoplasmic, with the downstream cell division proteins, which are predominantly periplasmic. In Mannheimia succiniciproducens (strain KCTC 0769BP / MBEL55E), this protein is Cell division protein FtsB.